A 196-amino-acid polypeptide reads, in one-letter code: [1-hydroxy-2-(trimethylamino)ethyl]phosphonate dioxygenase (glycine-betaine-forming) (196 aa).

Residue Tyr-30 coordinates [(1R)-1-hydroxy-2-(trimethylamino)ethyl]phosphonate. Positions 30, 40, 64, and 65 each coordinate Fe cation. The HD domain occupies 37–156 (MAEHMLQGAT…VAEFEKNPNL (120 aa)). Positions 68, 86, 109, 113, 131, 134, and 163 each coordinate [(1R)-1-hydroxy-2-(trimethylamino)ethyl]phosphonate. Residues His-86 and His-109 each contribute to the Fe cation site. Asp-166 serves as a coordination point for Fe cation.

The cofactor is Fe cation.

The enzyme catalyses [(1R)-1-hydroxy-2-(trimethylamino)ethyl]phosphonate + O2 = glycine betaine + phosphate + 2 H(+). In terms of biological role, involved in the degradation of the naturally occurring organophosphonate 2-(trimethylammonio)ethylphosphonate (TMAEP). Catalyzes the O(2)-dependent cleavage of (R)-1-hydroxy-2-(trimethylammonio)ethylphosphonate (OH-TMAEP) to yield glycine betaine and phosphate. Is highly specific for its N-trimethylated substrate. The polypeptide is [1-hydroxy-2-(trimethylamino)ethyl]phosphonate dioxygenase (glycine-betaine-forming) (Leisingera caerulea (Phaeobacter caeruleus)).